We begin with the raw amino-acid sequence, 450 residues long: MREIISIHIGQAGIQVGNACWELYCLEHGIEPDGTMPSDTSVGVAHDAFNTFFSETGSGKHVPRAIFVDLEPTVIDEVRTGSYRQLFHPEQLISGKEDAANNFARGHYTVGKEIVDLCLDRVRKLADNCTGLQGFLVFNAVGGGTGSGLGSLLLERLSVDYGKKSKLGFTIYPSPQVSTAVVEPYNSVLSTHSLLEHTDVAVLLDNEAIYDICRRSLDIERPTYTNLNRLISQIISSLTTSLRFDGAINVDVTEFQTNLVPYPRIHFMLSSYAPVISAEKAYHEQLSVPEITNAVFEPSSMMAKCDPRHGKYMACCLMYRGDVVPKDVNAAVATIKTKRTVQFVDWCPTGFKCGINYQPPSVVPGGDLAKVQRAVCMISNNTAVAEVFSRIDHKFDLMYAKRAFVHWYVGEGMEEGEFSEAREDLAALEKDYEEVGAEGADDEGDEGEDY.

Positions 11, 71, 144, 145, 179, 206, and 228 each coordinate GTP. Position 71 (E71) interacts with Mg(2+). E254 is an active-site residue.

The protein belongs to the tubulin family. Dimer of alpha and beta chains. A typical microtubule is a hollow water-filled tube with an outer diameter of 25 nm and an inner diameter of 15 nM. Alpha-beta heterodimers associate head-to-tail to form protofilaments running lengthwise along the microtubule wall with the beta-tubulin subunit facing the microtubule plus end conferring a structural polarity. Microtubules usually have 13 protofilaments but different protofilament numbers can be found in some organisms and specialized cells. Mg(2+) serves as cofactor. In terms of processing, undergoes a tyrosination/detyrosination cycle, the cyclic removal and re-addition of a C-terminal tyrosine residue by the enzymes tubulin tyrosine carboxypeptidase (TTCP) and tubulin tyrosine ligase (TTL), respectively.

The protein localises to the cytoplasm. Its subcellular location is the cytoskeleton. It catalyses the reaction GTP + H2O = GDP + phosphate + H(+). Its function is as follows. Tubulin is the major constituent of microtubules, a cylinder consisting of laterally associated linear protofilaments composed of alpha- and beta-tubulin heterodimers. Microtubules grow by the addition of GTP-tubulin dimers to the microtubule end, where a stabilizing cap forms. Below the cap, tubulin dimers are in GDP-bound state, owing to GTPase activity of alpha-tubulin. This is Tubulin alpha-3 chain (TUBA3) from Eleusine indica (Goosegrass).